A 563-amino-acid chain; its full sequence is Kelch repeat and BTB domain-containing protein 1 (563 aa).

One can recognise a BTB domain in the interval 21–88; that stretch reads CDINIVINDE…IYGIPLSLTN (68 aa). Residues 123–219 form the BACK domain; that stretch reads CIDFYIYADK…SLLSPQVIKS (97 aa). 6 Kelch repeats span residues 252–297, 298–346, 347–395, 397–441, 442–492, and 494–538; these read IELI…VLDN, IIYM…ADDE, YIYC…MLNG, IYVI…VHAG, KIYI…SAHN, and LYVG…CEPI.

As to quaternary structure, interacts (via BTB domain) with host CUL3.

It is found in the host cytoplasm. Functionally, probable substrate-specific adapter of CUL3-containing E3 ubiquitin-protein ligases which mediate the ubiquitination and subsequent proteasomal degradation of host target proteins. This is Kelch repeat and BTB domain-containing protein 1 (KBTB1) from Cowpox virus (strain Brighton Red) (CPV).